Consider the following 452-residue polypeptide: UDP-N-acetylmuramoylalanine--D-glutamate ligase (452 aa).

119-125 serves as a coordination point for ATP; it reads GSNGKTT.

It belongs to the MurCDEF family.

It localises to the cytoplasm. It carries out the reaction UDP-N-acetyl-alpha-D-muramoyl-L-alanine + D-glutamate + ATP = UDP-N-acetyl-alpha-D-muramoyl-L-alanyl-D-glutamate + ADP + phosphate + H(+). The protein operates within cell wall biogenesis; peptidoglycan biosynthesis. Cell wall formation. Catalyzes the addition of glutamate to the nucleotide precursor UDP-N-acetylmuramoyl-L-alanine (UMA). The chain is UDP-N-acetylmuramoylalanine--D-glutamate ligase from Streptococcus pyogenes serotype M2 (strain MGAS10270).